Reading from the N-terminus, the 105-residue chain is MKNKIKIRLKSFDHRILDQATKEIVSAIKRTFANINGPIPLPRKIERFTVNRSPHVHKKSREQFEIRKHKRLLVIDDPNPAVVDALSKVDLAAGVDVVIELESGE.

Belongs to the universal ribosomal protein uS10 family. As to quaternary structure, part of the 30S ribosomal subunit.

Involved in the binding of tRNA to the ribosomes. The polypeptide is Small ribosomal subunit protein uS10 (Rickettsia canadensis (strain McKiel)).